The chain runs to 550 residues: Glucose-6-phosphate isomerase 3 (550 aa).

Glu-357 functions as the Proton donor in the catalytic mechanism. Catalysis depends on residues His-388 and Lys-514.

This sequence belongs to the GPI family.

Its subcellular location is the cytoplasm. It carries out the reaction alpha-D-glucose 6-phosphate = beta-D-fructose 6-phosphate. It participates in carbohydrate biosynthesis; gluconeogenesis. Its pathway is carbohydrate degradation; glycolysis; D-glyceraldehyde 3-phosphate and glycerone phosphate from D-glucose: step 2/4. Its function is as follows. Catalyzes the reversible isomerization of glucose-6-phosphate to fructose-6-phosphate. The chain is Glucose-6-phosphate isomerase 3 from Rhodococcus jostii (strain RHA1).